The chain runs to 332 residues: Galactinol synthase 7 (332 aa).

The active site involves K101. Residues D117, D119, and H255 each coordinate Mn(2+).

The protein belongs to the glycosyltransferase 8 family. Galactosyltransferase subfamily. The cofactor is a divalent metal cation.

The protein localises to the cytoplasm. It carries out the reaction myo-inositol + UDP-alpha-D-galactose = alpha-D-galactosyl-(1-&gt;3)-1D-myo-inositol + UDP + H(+). Its function is as follows. Galactinol synthase involved in the biosynthesis of raffinose family oligosaccharides (RFOs) that function as osmoprotectants. May promote plant stress tolerance. In Arabidopsis thaliana (Mouse-ear cress), this protein is Galactinol synthase 7 (GOLS7).